The following is a 497-amino-acid chain: Validamine 7-phosphate valienyltransferase (497 aa).

A GDP-valienol-binding site is contributed by D158. Residue H182 coordinates validamine 7-phosphate. GDP-valienol-binding positions include R290, K295, R321, 325-326 (NR), 361-362 (ND), and T366. 383 to 386 (DGQN) is a binding site for validamine 7-phosphate. Residues 387–388 (LS) and E391 contribute to the GDP-valienol site.

This sequence belongs to the glycosyltransferase 20 family. Homodimer.

It catalyses the reaction validamine 7-phosphate + GDP-valienol = validoxylamine A 7'-phosphate + GDP + H(+). Involved in the biosynthesis of the antifungal agent validamycin A. Catalyzes the condensation between GDP-valienol and validamine 7-phosphate via a nonglycosidic C-N bond formation to yield validoxylamine A 7'-phosphate. This chain is Validamine 7-phosphate valienyltransferase, found in Streptomyces hygroscopicus subsp. limoneus.